Reading from the N-terminus, the 528-residue chain is ATP synthase subunit alpha (528 aa).

169–176 provides a ligand contact to ATP; sequence GDRQTGKT.

This sequence belongs to the ATPase alpha/beta chains family. In terms of assembly, F-type ATPases have 2 components, CF(1) - the catalytic core - and CF(0) - the membrane proton channel. CF(1) has five subunits: alpha(3), beta(3), gamma(1), delta(1), epsilon(1). CF(0) has three main subunits: a(1), b(2) and c(9-12). The alpha and beta chains form an alternating ring which encloses part of the gamma chain. CF(1) is attached to CF(0) by a central stalk formed by the gamma and epsilon chains, while a peripheral stalk is formed by the delta and b chains.

It is found in the cell membrane. It catalyses the reaction ATP + H2O + 4 H(+)(in) = ADP + phosphate + 5 H(+)(out). In terms of biological role, produces ATP from ADP in the presence of a proton gradient across the membrane. The alpha chain is a regulatory subunit. The chain is ATP synthase subunit alpha from Mycoplasmopsis agalactiae (strain NCTC 10123 / CIP 59.7 / PG2) (Mycoplasma agalactiae).